A 315-amino-acid chain; its full sequence is Ribose-phosphate pyrophosphokinase (315 aa).

Residues 37–39 (DGE) and 96–97 (RQ) contribute to the ATP site. Mg(2+)-binding residues include histidine 131 and aspartate 171. The active site involves lysine 195. Residues arginine 197, aspartate 221, and 225-229 (DTGGT) each bind D-ribose 5-phosphate.

Belongs to the ribose-phosphate pyrophosphokinase family. Class I subfamily. In terms of assembly, homohexamer. Requires Mg(2+) as cofactor.

Its subcellular location is the cytoplasm. It catalyses the reaction D-ribose 5-phosphate + ATP = 5-phospho-alpha-D-ribose 1-diphosphate + AMP + H(+). Its pathway is metabolic intermediate biosynthesis; 5-phospho-alpha-D-ribose 1-diphosphate biosynthesis; 5-phospho-alpha-D-ribose 1-diphosphate from D-ribose 5-phosphate (route I): step 1/1. Its function is as follows. Involved in the biosynthesis of the central metabolite phospho-alpha-D-ribosyl-1-pyrophosphate (PRPP) via the transfer of pyrophosphoryl group from ATP to 1-hydroxyl of ribose-5-phosphate (Rib-5-P). The polypeptide is Ribose-phosphate pyrophosphokinase (Haemophilus influenzae (strain ATCC 51907 / DSM 11121 / KW20 / Rd)).